The following is a 343-amino-acid chain: Methylthioribose-1-phosphate isomerase (343 aa).

Residues 48–50 (RGA), Arg-88, and Gln-193 contribute to the substrate site. The active-site Proton donor is the Asp-234. 244-245 (NK) provides a ligand contact to substrate.

Belongs to the eIF-2B alpha/beta/delta subunits family. MtnA subfamily.

It catalyses the reaction 5-(methylsulfanyl)-alpha-D-ribose 1-phosphate = 5-(methylsulfanyl)-D-ribulose 1-phosphate. It participates in amino-acid biosynthesis; L-methionine biosynthesis via salvage pathway; L-methionine from S-methyl-5-thio-alpha-D-ribose 1-phosphate: step 1/6. Its function is as follows. Catalyzes the interconversion of methylthioribose-1-phosphate (MTR-1-P) into methylthioribulose-1-phosphate (MTRu-1-P). The chain is Methylthioribose-1-phosphate isomerase from Thermotoga maritima (strain ATCC 43589 / DSM 3109 / JCM 10099 / NBRC 100826 / MSB8).